The chain runs to 402 residues: Dual-specificity RNA methyltransferase RlmN (402 aa).

Glu-124 functions as the Proton acceptor in the catalytic mechanism. Positions 130–370 (DADRGTLCVS…APVRTPRGRD (241 aa)) constitute a Radical SAM core domain. Residues Cys-137 and Cys-375 are joined by a disulfide bond. Residues Cys-144, Cys-148, and Cys-151 each coordinate [4Fe-4S] cluster. Residues 199–200 (GE), Ser-231, 253–255 (SLH), and Asn-332 contribute to the S-adenosyl-L-methionine site. Cys-375 (S-methylcysteine intermediate) is an active-site residue.

The protein belongs to the radical SAM superfamily. RlmN family. The cofactor is [4Fe-4S] cluster.

The protein resides in the cytoplasm. The enzyme catalyses adenosine(2503) in 23S rRNA + 2 reduced [2Fe-2S]-[ferredoxin] + 2 S-adenosyl-L-methionine = 2-methyladenosine(2503) in 23S rRNA + 5'-deoxyadenosine + L-methionine + 2 oxidized [2Fe-2S]-[ferredoxin] + S-adenosyl-L-homocysteine. The catalysed reaction is adenosine(37) in tRNA + 2 reduced [2Fe-2S]-[ferredoxin] + 2 S-adenosyl-L-methionine = 2-methyladenosine(37) in tRNA + 5'-deoxyadenosine + L-methionine + 2 oxidized [2Fe-2S]-[ferredoxin] + S-adenosyl-L-homocysteine. Specifically methylates position 2 of adenine 2503 in 23S rRNA and position 2 of adenine 37 in tRNAs. m2A2503 modification seems to play a crucial role in the proofreading step occurring at the peptidyl transferase center and thus would serve to optimize ribosomal fidelity. The polypeptide is Dual-specificity RNA methyltransferase RlmN (Rhizorhabdus wittichii (strain DSM 6014 / CCUG 31198 / JCM 15750 / NBRC 105917 / EY 4224 / RW1) (Sphingomonas wittichii)).